The chain runs to 87 residues: Small ribosomal subunit protein bS20 (87 aa).

The segment at 1 to 20 (MANIKSQIKRNKTNEKARLR) is disordered.

It belongs to the bacterial ribosomal protein bS20 family.

Binds directly to 16S ribosomal RNA. The polypeptide is Small ribosomal subunit protein bS20 (Corynebacterium efficiens (strain DSM 44549 / YS-314 / AJ 12310 / JCM 11189 / NBRC 100395)).